Here is a 201-residue protein sequence, read N- to C-terminus: CASP-like protein 2B2 (201 aa).

At 1–28 (MSYLGVGVSPGNVTGSSTKMKLIDRKVR) the chain is on the cytoplasmic side. A helical membrane pass occupies residues 29–49 (VTELILRSLVCAFALVAAILV). Over 50 to 71 (ATDVQVREIFTIQKKAKFTDMK) the chain is Extracellular. The helical transmembrane segment at 72-92 (ALVFLVVINGIAAGYSLVQAV) threads the bilayer. Topologically, residues 93 to 108 (CCLVGLMKGSVLLSEP) are cytoplasmic. The helical transmembrane segment at 109 to 129 (LAWAIFFGDQAVAYLCVAGVA) threads the bilayer. The Extracellular portion of the chain corresponds to 130–166 (AAAQSAAFAKLGQPELQWMKICDMYGKFCNQVGEGIA). A helical membrane pass occupies residues 167–187 (SALFACIGMVLISCISAFGVF). Residues 188–201 (RLYGGSKPRQSSRW) are Cytoplasmic-facing.

The protein belongs to the Casparian strip membrane proteins (CASP) family. As to quaternary structure, homodimer and heterodimers.

It localises to the cell membrane. This is CASP-like protein 2B2 from Arabidopsis lyrata subsp. lyrata (Lyre-leaved rock-cress).